A 251-amino-acid chain; its full sequence is uncharacterized protein (251 aa).

12–36 (VVTGASSGIGEATARTLAAQGFHVV) contributes to the NADP(+) binding site. Ser-136 is a substrate binding site. Residue Tyr-149 is the Proton acceptor of the active site.

The protein belongs to the short-chain dehydrogenases/reductases (SDR) family.

This is an uncharacterized protein from Mycobacterium tuberculosis (strain CDC 1551 / Oshkosh).